Reading from the N-terminus, the 635-residue chain is Replication factor C small subunit (635 aa).

51–58 (GPPGTGKT) contacts ATP.

The protein belongs to the activator 1 small subunits family. RfcS subfamily. In terms of assembly, heteromultimer composed of small subunits (RfcS) and large subunits (RfcL). This protein undergoes a protein self splicing that involves a post-translational excision of the intervening region (intein) followed by peptide ligation.

Part of the RFC clamp loader complex which loads the PCNA sliding clamp onto DNA. In Methanopyrus kandleri (strain AV19 / DSM 6324 / JCM 9639 / NBRC 100938), this protein is Replication factor C small subunit (rfcS).